A 287-amino-acid chain; its full sequence is 4-hydroxybenzoate octaprenyltransferase (287 aa).

Transmembrane regions (helical) follow at residues 19–39, 42–62, 95–115, 136–156, 166–186, 210–230, 233–253, and 264–284; these read IGSL…ADGL, WHVL…GCVI, FFAV…TLTI, YLPQ…AYAA, WLLF…YAMV, IIGL…SQLA, GIYY…QWLI, and AFLN…ASVL.

The protein belongs to the UbiA prenyltransferase family. The cofactor is Mg(2+).

It localises to the cell inner membrane. The catalysed reaction is all-trans-octaprenyl diphosphate + 4-hydroxybenzoate = 4-hydroxy-3-(all-trans-octaprenyl)benzoate + diphosphate. Its pathway is cofactor biosynthesis; ubiquinone biosynthesis. Catalyzes the prenylation of para-hydroxybenzoate (PHB) with an all-trans polyprenyl group. Mediates the second step in the final reaction sequence of ubiquinone-8 (UQ-8) biosynthesis, which is the condensation of the polyisoprenoid side chain with PHB, generating the first membrane-bound Q intermediate 3-octaprenyl-4-hydroxybenzoate. In Aliivibrio fischeri (strain MJ11) (Vibrio fischeri), this protein is 4-hydroxybenzoate octaprenyltransferase.